Here is a 540-residue protein sequence, read N- to C-terminus: Chaperonin GroEL (540 aa).

ATP-binding positions include 29 to 32 (TLGP), 86 to 90 (DGTTT), Gly413, 476 to 478 (NAA), and Asp492.

This sequence belongs to the chaperonin (HSP60) family. In terms of assembly, forms a cylinder of 14 subunits composed of two heptameric rings stacked back-to-back. Interacts with the co-chaperonin GroES.

The protein localises to the cytoplasm. The catalysed reaction is ATP + H2O + a folded polypeptide = ADP + phosphate + an unfolded polypeptide.. In terms of biological role, together with its co-chaperonin GroES, plays an essential role in assisting protein folding. The GroEL-GroES system forms a nano-cage that allows encapsulation of the non-native substrate proteins and provides a physical environment optimized to promote and accelerate protein folding. This Streptococcus constellatus protein is Chaperonin GroEL.